A 235-amino-acid polypeptide reads, in one-letter code: Protein RESISTANCE TO PHYTOPHTHORA 1, chloroplastic (235 aa).

The N-terminal 43 residues, M1–S43, are a transit peptide targeting the chloroplast. The segment covering V53 to D66 has biased composition (basic and acidic residues). A disordered region spans residues V53 to V92. 4 helical membrane-spanning segments follow: residues F131–F151, I158–R178, L188–S208, and V211–L231.

The protein localises to the plastid. It is found in the chloroplast. Its subcellular location is the membrane. In terms of biological role, plays a positive role in the immune response to the oomycetes P.infestans, including induced oxidative burst and enhanced expression of defense-related genes. The polypeptide is Protein RESISTANCE TO PHYTOPHTHORA 1, chloroplastic (Solanum tuberosum (Potato)).